We begin with the raw amino-acid sequence, 192 residues long: Urease accessory protein UreE (192 aa).

Residues 170-192 (EHHGHSHSHSHDHVHDEKCGHKH) are disordered. Residues 178–192 (HSHDHVHDEKCGHKH) show a composition bias toward basic and acidic residues.

The protein belongs to the UreE family.

It is found in the cytoplasm. In terms of biological role, involved in urease metallocenter assembly. Binds nickel. Probably functions as a nickel donor during metallocenter assembly. In Cupriavidus necator (strain ATCC 17699 / DSM 428 / KCTC 22496 / NCIMB 10442 / H16 / Stanier 337) (Ralstonia eutropha), this protein is Urease accessory protein UreE.